We begin with the raw amino-acid sequence, 729 residues long: Fatty acid oxidation complex subunit alpha (729 aa).

The interval 1-189 is enoyl-CoA hydratase/isomerase; it reads MLYKGDTLYL…KIGLVDGVVK (189 aa). D296 contributes to the substrate binding site. Residues 311–729 are 3-hydroxyacyl-CoA dehydrogenase; it reads ETPKQAAVLG…ARPVGSLKTA (419 aa). NAD(+) contacts are provided by residues M324, D343, 400–402, K407, and S429; that span reads VVE. The For 3-hydroxyacyl-CoA dehydrogenase activity role is filled by H450. Residue N453 coordinates NAD(+). 2 residues coordinate substrate: N500 and Y660. Residues 707 to 729 form a disordered region; it reads TRHNEPYYPPVEPARPVGSLKTA.

It in the N-terminal section; belongs to the enoyl-CoA hydratase/isomerase family. The protein in the C-terminal section; belongs to the 3-hydroxyacyl-CoA dehydrogenase family. As to quaternary structure, heterotetramer of two alpha chains (FadB) and two beta chains (FadA).

The catalysed reaction is a (3S)-3-hydroxyacyl-CoA + NAD(+) = a 3-oxoacyl-CoA + NADH + H(+). It catalyses the reaction a (3S)-3-hydroxyacyl-CoA = a (2E)-enoyl-CoA + H2O. It carries out the reaction a 4-saturated-(3S)-3-hydroxyacyl-CoA = a (3E)-enoyl-CoA + H2O. The enzyme catalyses (3S)-3-hydroxybutanoyl-CoA = (3R)-3-hydroxybutanoyl-CoA. The catalysed reaction is a (3Z)-enoyl-CoA = a 4-saturated (2E)-enoyl-CoA. It catalyses the reaction a (3E)-enoyl-CoA = a 4-saturated (2E)-enoyl-CoA. The protein operates within lipid metabolism; fatty acid beta-oxidation. Functionally, involved in the aerobic and anaerobic degradation of long-chain fatty acids via beta-oxidation cycle. Catalyzes the formation of 3-oxoacyl-CoA from enoyl-CoA via L-3-hydroxyacyl-CoA. It can also use D-3-hydroxyacyl-CoA and cis-3-enoyl-CoA as substrate. This Salmonella typhi protein is Fatty acid oxidation complex subunit alpha.